The chain runs to 256 residues: uncharacterized protein (256 aa).

This is an uncharacterized protein from Pasteurella multocida (strain Pm70).